Here is a 491-residue protein sequence, read N- to C-terminus: MKYHDLRDFLTLLEQQGELKRITLPVDPHLEITEIADRTLRAGGPALLFENPKGYTMPVLCNLFGTPRRVALGMGQEDVSSLREVGKLLAFLKEPEPPKGFRDLFDKLPQFKQVLNMPTKRLRGAPCQQKIIQGDDVDLNKIPIMTCWPEDAAPLITWGLTVTRGPHKERQNLGIYRQQLIGKNKLIMRWLSHRGGALDFQEWCAARPGERFPVSVALGADPATILGAVTPVPDTLSEYAFAGLLRGTKTEVVKCVSNDLEVPASAEIVLEGYIEAGEMAPEGPYGDHTGYYNEVDSFPVFTVTHITQREDAIYHSTYTGRPPDEPAVLGVALNEVFVPILQKQFPEIVDFYLPPEGCSYRLAVVTMKKQYAGHAKRVMMGVWSFLRQFMYTKFVIVCDDDVNARDWNDVIWAITTRMDPARDTVLVENTPIDYLDFASPVSGLGSKMGLDATNKWPGETQREWGRPIKKDPAVTARIDAIWDELAIFKQQ.

N172 contacts Mn(2+). Prenylated FMN contacts are provided by residues 175–177 (IYR), 189–191 (RWL), and 194–195 (RG). A Mn(2+)-binding site is contributed by E238. Residue D287 is the Proton donor of the active site.

This sequence belongs to the UbiD family. As to quaternary structure, homohexamer. Requires prenylated FMN as cofactor. Mn(2+) serves as cofactor.

It is found in the cell membrane. The enzyme catalyses a 4-hydroxy-3-(all-trans-polyprenyl)benzoate + H(+) = a 2-(all-trans-polyprenyl)phenol + CO2. The protein operates within cofactor biosynthesis; ubiquinone biosynthesis. In terms of biological role, catalyzes the decarboxylation of 3-octaprenyl-4-hydroxy benzoate to 2-octaprenylphenol, an intermediate step in ubiquinone biosynthesis. The sequence is that of 3-octaprenyl-4-hydroxybenzoate carboxy-lyase from Klebsiella pneumoniae subsp. pneumoniae (strain ATCC 700721 / MGH 78578).